The chain runs to 437 residues: ATP-dependent protease ATPase subunit HslU (437 aa).

ATP contacts are provided by residues V18, 60–65 (GCGKTE), D250, E315, and R387.

It belongs to the ClpX chaperone family. HslU subfamily. In terms of assembly, a double ring-shaped homohexamer of HslV is capped on each side by a ring-shaped HslU homohexamer. The assembly of the HslU/HslV complex is dependent on binding of ATP.

Its subcellular location is the cytoplasm. Functionally, ATPase subunit of a proteasome-like degradation complex; this subunit has chaperone activity. The binding of ATP and its subsequent hydrolysis by HslU are essential for unfolding of protein substrates subsequently hydrolyzed by HslV. HslU recognizes the N-terminal part of its protein substrates and unfolds these before they are guided to HslV for hydrolysis. The chain is ATP-dependent protease ATPase subunit HslU from Methylobacterium sp. (strain 4-46).